The following is a 141-amino-acid chain: ATP synthase epsilon chain (141 aa).

This sequence belongs to the ATPase epsilon chain family. F-type ATPases have 2 components, CF(1) - the catalytic core - and CF(0) - the membrane proton channel. CF(1) has five subunits: alpha(3), beta(3), gamma(1), delta(1), epsilon(1). CF(0) has three main subunits: a, b and c.

The protein resides in the cell membrane. Its function is as follows. Produces ATP from ADP in the presence of a proton gradient across the membrane. The protein is ATP synthase epsilon chain of Lactococcus lactis subsp. cremoris (strain MG1363).